An 80-amino-acid chain; its full sequence is MSCCGGNCGCGAGCKCVGCGGCKMYPDLSFSGETTTTETLVLGLAPAMNSQFEASGETFVAENDACKCGSDCKCNPCTCK.

Belongs to the metallothionein superfamily. Type 15 family.

Functionally, metallothioneins have a high content of cysteine residues that bind various heavy metals. The protein is Metallothionein-like protein type 2, MT2-28 of Brassica juncea (Indian mustard).